The chain runs to 216 residues: Somatotropin (216 aa).

Residues 1-26 (MAAGPRTSVLLAFGLLCLPWPQDVGA) form the signal peptide. His45 is a binding site for Zn(2+). An intrachain disulfide couples Cys78 to Cys189. Ser131 bears the Phosphoserine mark. Position 198 (Glu198) interacts with Zn(2+). Cys206 and Cys214 are oxidised to a cystine.

The protein belongs to the somatotropin/prolactin family.

Its subcellular location is the secreted. Plays an important role in growth control. Its major role in stimulating body growth is to stimulate the liver and other tissues to secrete IGF1. It stimulates both the differentiation and proliferation of myoblasts. It also stimulates amino acid uptake and protein synthesis in muscle and other tissues. In Equus caballus (Horse), this protein is Somatotropin (GH1).